The chain runs to 190 residues: Small ribosomal subunit protein eS7A (190 aa).

N-acetylserine is present on S2. Residues K83, K84, and K124 each participate in a glycyl lysine isopeptide (Lys-Gly) (interchain with G-Cter in ubiquitin) cross-link.

It belongs to the eukaryotic ribosomal protein eS7 family. Component of the small ribosomal subunit (SSU). Mature yeast ribosomes consist of a small (40S) and a large (60S) subunit. The 40S small subunit contains 1 molecule of ribosomal RNA (18S rRNA) and 33 different proteins (encoded by 57 genes). The large 60S subunit contains 3 rRNA molecules (25S, 5.8S and 5S rRNA) and 46 different proteins (encoded by 81 genes). Interacts with snoRNA U3. uS11 interacts with MPP10. Component of the ribosomal small subunit (SSU) processome composed of at least 40 protein subunits and snoRNA U3. Post-translationally, N-terminally acetylated by acetyltransferase NatA. In terms of processing, ubiquitinated at Lys-83 and Lys-84 in response to stalled ribosomes, leading to activation of the No-Go Decay (NGD) pathway: first monoubiquitinated by MOT2/NOT4, followed by formation by HEL2 of 'Lys-63'-linked polyubiquitin chains on monoubiquitin.

Its subcellular location is the cytoplasm. The protein resides in the nucleus. The protein localises to the nucleolus. Component of the ribosome, a large ribonucleoprotein complex responsible for the synthesis of proteins in the cell. The small ribosomal subunit (SSU) binds messenger RNAs (mRNAs) and translates the encoded message by selecting cognate aminoacyl-transfer RNA (tRNA) molecules. The large subunit (LSU) contains the ribosomal catalytic site termed the peptidyl transferase center (PTC), which catalyzes the formation of peptide bonds, thereby polymerizing the amino acids delivered by tRNAs into a polypeptide chain. The nascent polypeptides leave the ribosome through a tunnel in the LSU and interact with protein factors that function in enzymatic processing, targeting, and the membrane insertion of nascent chains at the exit of the ribosomal tunnel. eS7 is involved in nucleolar processing of pre-18S ribosomal RNA and ribosome assembly. This Saccharomyces cerevisiae (strain ATCC 204508 / S288c) (Baker's yeast) protein is Small ribosomal subunit protein eS7A.